Here is a 598-residue protein sequence, read N- to C-terminus: UvrABC system protein C (598 aa).

The GIY-YIG domain occupies 13-92 (SSPGVYLMKD…IKKYQPRYNV (80 aa)). One can recognise a UVR domain in the interval 206–241 (DTTIANLEEAIKKASQEHKFEHAAALYRTLTLIRQT).

Belongs to the UvrC family. As to quaternary structure, interacts with UvrB in an incision complex.

The protein localises to the cytoplasm. In terms of biological role, the UvrABC repair system catalyzes the recognition and processing of DNA lesions. UvrC both incises the 5' and 3' sides of the lesion. The N-terminal half is responsible for the 3' incision and the C-terminal half is responsible for the 5' incision. The sequence is that of UvrABC system protein C from Chlamydia muridarum (strain MoPn / Nigg).